A 361-amino-acid chain; its full sequence is Porphobilinogen deaminase (361 aa).

An S-(dipyrrolylmethanemethyl)cysteine modification is found at Cys-265. The interval 341–361 is disordered; it reads LPPSSNTPTPQPITPITTNNS.

Belongs to the HMBS family. Dipyrromethane serves as cofactor.

The catalysed reaction is 4 porphobilinogen + H2O = hydroxymethylbilane + 4 NH4(+). Its pathway is porphyrin-containing compound metabolism; protoporphyrin-IX biosynthesis; coproporphyrinogen-III from 5-aminolevulinate: step 2/4. Its function is as follows. Tetrapolymerization of the monopyrrole PBG into the hydroxymethylbilane pre-uroporphyrinogen in several discrete steps. This is Porphobilinogen deaminase (HEM3) from Debaryomyces hansenii (strain ATCC 36239 / CBS 767 / BCRC 21394 / JCM 1990 / NBRC 0083 / IGC 2968) (Yeast).